The following is a 122-amino-acid chain: MSITRKEILDAISEMSIKNIMKLISNIEKKFNISSNISLNSTQTIQEKVPEEKTAFTVKLNAIGPNKVAIIKIIRSTTGLGLKESKDLVESAPTIIKENINKQDAESLKKNLIDSGAEAEIT.

This sequence belongs to the bacterial ribosomal protein bL12 family. In terms of assembly, homodimer. Part of the ribosomal stalk of the 50S ribosomal subunit. Forms a multimeric L10(L12)X complex, where L10 forms an elongated spine to which 2 to 4 L12 dimers bind in a sequential fashion. Binds GTP-bound translation factors.

In terms of biological role, forms part of the ribosomal stalk which helps the ribosome interact with GTP-bound translation factors. Is thus essential for accurate translation. The sequence is that of Large ribosomal subunit protein bL12 from Buchnera aphidicola subsp. Cinara cedri (strain Cc).